Reading from the N-terminus, the 347-residue chain is tRNA N6-adenosine threonylcarbamoyltransferase (347 aa).

His113 and His117 together coordinate Fe cation. Substrate-binding positions include Leu136–Gly140, Asp170, Gly183, Asp187, and Asn282. Asp310 contacts Fe cation.

This sequence belongs to the KAE1 / TsaD family. The cofactor is Fe(2+).

It is found in the cytoplasm. It catalyses the reaction L-threonylcarbamoyladenylate + adenosine(37) in tRNA = N(6)-L-threonylcarbamoyladenosine(37) in tRNA + AMP + H(+). Required for the formation of a threonylcarbamoyl group on adenosine at position 37 (t(6)A37) in tRNAs that read codons beginning with adenine. Is involved in the transfer of the threonylcarbamoyl moiety of threonylcarbamoyl-AMP (TC-AMP) to the N6 group of A37, together with TsaE and TsaB. TsaD likely plays a direct catalytic role in this reaction. This chain is tRNA N6-adenosine threonylcarbamoyltransferase, found in Cutibacterium acnes (strain DSM 16379 / KPA171202) (Propionibacterium acnes).